We begin with the raw amino-acid sequence, 317 residues long: MSFGDFSKICQRTPLPLCSVVKSAKQMVLTNDTTIKNSRLDIIDLGIIPVCYARSIDVANTMIFEIGNAFINIVAFFLLIIIIYNVRRKVTAIGRSEYSYFFQTCLVLIIFTLIVDCGVSAPGSSAYPYLVSVQLGLAGACCWMLSVLGLLGFRLWEDGTFKSMLLLYGMSFGGFILNFVVSIVTFKEWIQRKSDMSTDTMGLFTVMYVINALALLIYIICLLIVSVKVLQNYWATGAILLGVFFFVAGQVLIYAFSNNICEGMNHYLDGMFFGSLCNLFAIMMLYKNWDMSTDDDLEFSVSIDSTEYSTFNSDIKL.

Transmembrane regions (helical) follow at residues 63–83 (IFEI…IIII), 101–121 (FFQT…GVSA), 133–153 (VQLG…LLGF), 164–184 (MLLL…VSIV), 204–224 (FTVM…CLLI), 236–256 (TGAI…IYAF), and 266–286 (HYLD…MMLY).

This sequence belongs to the CHS7 family. As to quaternary structure, interacts with CHS3.

The protein resides in the endoplasmic reticulum membrane. Functionally, chaperone required for the export of the chitin synthase CHS3 from the endoplasmic reticulum. The polypeptide is Chitin synthase export chaperone (CHS7) (Kluyveromyces lactis (strain ATCC 8585 / CBS 2359 / DSM 70799 / NBRC 1267 / NRRL Y-1140 / WM37) (Yeast)).